The following is a 177-amino-acid chain: NADH-quinone oxidoreductase subunit B (177 aa).

The [4Fe-4S] cluster site is built by Cys-53, Cys-54, Cys-118, and Cys-148.

It belongs to the complex I 20 kDa subunit family. NDH-1 is composed of 14 different subunits. Subunits NuoB, C, D, E, F, and G constitute the peripheral sector of the complex. Requires [4Fe-4S] cluster as cofactor.

The protein localises to the cell membrane. The catalysed reaction is a quinone + NADH + 5 H(+)(in) = a quinol + NAD(+) + 4 H(+)(out). Functionally, NDH-1 shuttles electrons from NADH, via FMN and iron-sulfur (Fe-S) centers, to quinones in the respiratory chain. The immediate electron acceptor for the enzyme in this species is believed to be a menaquinone. Couples the redox reaction to proton translocation (for every two electrons transferred, four hydrogen ions are translocated across the cytoplasmic membrane), and thus conserves the redox energy in a proton gradient. The protein is NADH-quinone oxidoreductase subunit B of Anoxybacillus flavithermus (strain DSM 21510 / WK1).